The sequence spans 331 residues: Ketol-acid reductoisomerase (NADP(+)) (331 aa).

The KARI N-terminal Rossmann domain occupies 2–181 (IKKYYESDAD…GATRAVVFET (180 aa)). Residues 25-28 (YGSQ), Arg48, Ser52, and 82-85 (DESQ) each bind NADP(+). Residue His107 is part of the active site. NADP(+) is bound at residue Gly133. Residues 182-327 (TFREETETDL…AEIRGLMPQF (146 aa)) enclose the KARI C-terminal knotted domain. Positions 190, 194, 226, and 230 each coordinate Mg(2+). Substrate is bound at residue Ser251.

This sequence belongs to the ketol-acid reductoisomerase family. Requires Mg(2+) as cofactor.

The enzyme catalyses (2R)-2,3-dihydroxy-3-methylbutanoate + NADP(+) = (2S)-2-acetolactate + NADPH + H(+). It carries out the reaction (2R,3R)-2,3-dihydroxy-3-methylpentanoate + NADP(+) = (S)-2-ethyl-2-hydroxy-3-oxobutanoate + NADPH + H(+). It functions in the pathway amino-acid biosynthesis; L-isoleucine biosynthesis; L-isoleucine from 2-oxobutanoate: step 2/4. The protein operates within amino-acid biosynthesis; L-valine biosynthesis; L-valine from pyruvate: step 2/4. Functionally, involved in the biosynthesis of branched-chain amino acids (BCAA). Catalyzes an alkyl-migration followed by a ketol-acid reduction of (S)-2-acetolactate (S2AL) to yield (R)-2,3-dihydroxy-isovalerate. In the isomerase reaction, S2AL is rearranged via a Mg-dependent methyl migration to produce 3-hydroxy-3-methyl-2-ketobutyrate (HMKB). In the reductase reaction, this 2-ketoacid undergoes a metal-dependent reduction by NADPH to yield (R)-2,3-dihydroxy-isovalerate. The polypeptide is Ketol-acid reductoisomerase (NADP(+)) (Methanosphaerula palustris (strain ATCC BAA-1556 / DSM 19958 / E1-9c)).